The primary structure comprises 326 residues: Putative ribose-phosphate pyrophosphokinase 2 (326 aa).

ATP contacts are provided by residues 43–45 (DGE) and 102–103 (RQ). Position 136 (His-136) interacts with Mg(2+). Residues Asp-225 and 229-233 (NTGKT) each bind D-ribose 5-phosphate.

It belongs to the ribose-phosphate pyrophosphokinase family. Class I subfamily. Homohexamer. The cofactor is Mg(2+).

The protein resides in the cytoplasm. The enzyme catalyses D-ribose 5-phosphate + ATP = 5-phospho-alpha-D-ribose 1-diphosphate + AMP + H(+). It participates in metabolic intermediate biosynthesis; 5-phospho-alpha-D-ribose 1-diphosphate biosynthesis; 5-phospho-alpha-D-ribose 1-diphosphate from D-ribose 5-phosphate (route I): step 1/1. Functionally, involved in the biosynthesis of the central metabolite phospho-alpha-D-ribosyl-1-pyrophosphate (PRPP) via the transfer of pyrophosphoryl group from ATP to 1-hydroxyl of ribose-5-phosphate (Rib-5-P). The sequence is that of Putative ribose-phosphate pyrophosphokinase 2 from Streptococcus pyogenes serotype M18 (strain MGAS8232).